The chain runs to 133 residues: Small ribosomal subunit protein uS11 (133 aa).

The protein belongs to the universal ribosomal protein uS11 family. Part of the 30S ribosomal subunit. Interacts with proteins S7 and S18. Binds to IF-3.

In terms of biological role, located on the platform of the 30S subunit, it bridges several disparate RNA helices of the 16S rRNA. Forms part of the Shine-Dalgarno cleft in the 70S ribosome. The chain is Small ribosomal subunit protein uS11 from Methylibium petroleiphilum (strain ATCC BAA-1232 / LMG 22953 / PM1).